We begin with the raw amino-acid sequence, 285 residues long: Large ribosomal subunit protein uL1m (285 aa).

Residues 1 to 19 constitute a mitochondrion transit peptide; that stretch reads MLSVVAIPKICVTGPARRC.

It belongs to the universal ribosomal protein uL1 family. Component of the mitochondrial large ribosomal subunit (mt-LSU). Mature yeast 74S mitochondrial ribosomes consist of a small (37S) and a large (54S) subunit. The 37S small subunit contains a 15S ribosomal RNA (15S mt-rRNA) and 34 different proteins. The 54S large subunit contains a 21S rRNA (21S mt-rRNA) and 46 different proteins.

The protein localises to the mitochondrion. Functionally, component of the mitochondrial ribosome (mitoribosome), a dedicated translation machinery responsible for the synthesis of mitochondrial genome-encoded proteins, including at least some of the essential transmembrane subunits of the mitochondrial respiratory chain. The mitoribosomes are attached to the mitochondrial inner membrane and translation products are cotranslationally integrated into the membrane. This Saccharomyces cerevisiae (strain ATCC 204508 / S288c) (Baker's yeast) protein is Large ribosomal subunit protein uL1m (MRPL1).